A 140-amino-acid chain; its full sequence is Beta/delta-urticatoxin-De2a (140 aa).

The signal sequence occupies residues 1-18 (MKTSTALVLLLALTATSA). The propeptide occupies 19 to 78 (SSGDHQFIDEQNIMNVAEGKNVISSLSSSGGGDDAAAIMESVLVNGGNRKMVFMMVSGSQ). 6 disulfides stabilise this stretch: Cys-81/Cys-95, Cys-88/Cys-100, Cys-94/Cys-108, Cys-113/Cys-127, Cys-120/Cys-131, and Cys-126/Cys-139.

It belongs to the urticatoxin-2 family. As to expression, expressed in trichomes, that are stiff epidermal hairs located on the surface of petioles and leaves.

The protein localises to the secreted. Its function is as follows. Plant defense neurotoxin that causes pain and systemic symptoms in mammals via modulation of voltage-gated sodium channels (Nav). Potent modulator of human Nav1.5/SCN5A (EC(50)=55 nM), Nav1.6/SCN8A (EC(50)=0.86 nM), and Nav1.7/SCN9A (EC(50)=208 nM), where it shifts the activation threshold to more negative potentials and delays fast inactivation. Also shifts the voltage-dependence of steady-state fast inactivation of Nav1.6/SCN8A, but not that of Nav1.5/SCN5A or Nav1.7/SCN9A. On Nav1.7/SCN9A, principally acts by binding to extracellular loops of domain IV (Nav site 3). In vivo, intraplantar injection into mice causes numerous dose-dependent, immediate, and long-lasting spontaneous pain behaviors, while no swelling is observed in the injected paw. At the highest doses tested, systemic symptoms including hypokinesia and hypersalivation are observed. This chain is Beta/delta-urticatoxin-De2a, found in Dendrocnide excelsa (Giant stinging tree).